We begin with the raw amino-acid sequence, 264 residues long: ELL-associated factor 2 (264 aa).

Disordered regions lie at residues 114–154 and 169–264; these read EGSS…PSSP and MDQL…DSDD. The segment covering 117 to 142 has biased composition (polar residues); it reads SKVQSRIEQQQQQIRNSSKTPNNIKN. A compositionally biased stretch (low complexity) spans 173-196; that stretch reads SSSDSSSDSKSSSSSSSSSENSSS. Basic and acidic residues predominate over residues 228-238; the sequence is VPDKDASHNRS. Residues 239–264 show a composition bias toward polar residues; that stretch reads QENSGHMMNTLRSDLQLSESGSDSDD.

Belongs to the EAF family.

The protein localises to the nucleus speckle. Its function is as follows. May act as a transcriptional transactivator. In Gallus gallus (Chicken), this protein is ELL-associated factor 2 (EAF2).